The following is a 189-amino-acid chain: Ras-like protein 1 (189 aa).

10–17 is a binding site for GTP; that stretch reads GGGGVGKS. Residues 32-40 carry the Effector region motif; sequence YDPTIEDSY. GTP is bound by residues 57–61 and 116–119; these read DTAGQ and NKCD. Cysteine methyl ester is present on Cys-186. Cys-186 carries the S-geranylgeranyl cysteine lipid modification. Positions 187 to 189 are cleaved as a propeptide — removed in mature form; that stretch reads LLL.

It belongs to the small GTPase superfamily. Ras family.

It is found in the cell membrane. The enzyme catalyses GTP + H2O = GDP + phosphate + H(+). Functionally, ras proteins bind GDP/GTP and possess intrinsic GTPase activity. The polypeptide is Ras-like protein 1 (RAS1) (Physarum polycephalum (Slime mold)).